The chain runs to 403 residues: Formin-like protein 21b (403 aa).

The FH2 domain occupies 1–380 (MELLFTATLL…KAAKEAEMEK (380 aa)). A disordered region spans residues 373–403 (AKEAEMEKTKKRVSLTNKKASGVGEEESCLI).

Belongs to the formin-like family. Class-II subfamily.

This is Formin-like protein 21b (FH21B) from Arabidopsis thaliana (Mouse-ear cress).